A 147-amino-acid chain; its full sequence is Hemoglobin subunit beta-2 (147 aa).

The 145-residue stretch at glutamate 3–histidine 147 folds into the Globin domain. Heme b contacts are provided by histidine 64 and histidine 93.

This sequence belongs to the globin family. As to quaternary structure, hb 3 is a heterotetramer of two alpha-2 and two beta-2 chains. Red blood cells.

Involved in oxygen transport from gills to the various peripheral tissues. The protein is Hemoglobin subunit beta-2 (hbb2) of Arctogadus glacialis (Arctic cod).